Reading from the N-terminus, the 471-residue chain is Ribulose bisphosphate carboxylase large chain 2 (471 aa).

2 residues coordinate substrate: asparagine 116 and threonine 166. Residue lysine 168 is the Proton acceptor of the active site. A substrate-binding site is contributed by lysine 170. The Mg(2+) site is built by lysine 194, aspartate 196, and glutamate 197. The residue at position 194 (lysine 194) is an N6-carboxylysine. The active-site Proton acceptor is the histidine 287. Substrate contacts are provided by arginine 288, histidine 320, and serine 372.

The protein belongs to the RuBisCO large chain family. Type I subfamily. As to quaternary structure, heterohexadecamer of 8 large chains and 8 small chains. Forms a CsoS2-CsoS1-RuBisCO complex. The cofactor is Mg(2+).

It localises to the carboxysome. The catalysed reaction is 2 (2R)-3-phosphoglycerate + 2 H(+) = D-ribulose 1,5-bisphosphate + CO2 + H2O. The enzyme catalyses D-ribulose 1,5-bisphosphate + O2 = 2-phosphoglycolate + (2R)-3-phosphoglycerate + 2 H(+). RuBisCO catalyzes two reactions: the carboxylation of D-ribulose 1,5-bisphosphate, the primary event in carbon dioxide fixation, as well as the oxidative fragmentation of the pentose substrate. Both reactions occur simultaneously and in competition at the same active site. Replacing the endogenous type I ccbLS genes in H.neapolitanus with this carboxysomally targeted enzyme reconstitutes RuBisCO with about 25% of normal activity; the active enzyme is targeted to carboxysomes. The sequence is that of Ribulose bisphosphate carboxylase large chain 2 from Hydrogenovibrio crunogenus (strain DSM 25203 / XCL-2) (Thiomicrospira crunogena).